A 221-amino-acid chain; its full sequence is MTFFESELSAKKRDQRRGFLFILSSPSGAGKSTLSRLLLKDAQLERSVSVTTRQRRPSEVDGFHYHFVSKQEFECKRDGDEFIEWAEVHGNYYGTLRKSVENALSAGRDILFDIDYQGTEQLQKKMPGDTVSIFILPPSMKELILRLHRRAEDSQDIINLRLKNAQTEMQHWRFYDYVVINKDLNQSASLIKSIYLAETARRKRCSFLESFVDGLIDEKIN.

The 179-residue stretch at 18–196 folds into the Guanylate kinase-like domain; that stretch reads GFLFILSSPS…SASLIKSIYL (179 aa). 25–32 contacts ATP; sequence SPSGAGKS.

It belongs to the guanylate kinase family.

It is found in the cytoplasm. It catalyses the reaction GMP + ATP = GDP + ADP. Functionally, essential for recycling GMP and indirectly, cGMP. The polypeptide is Guanylate kinase (Bartonella quintana (strain Toulouse) (Rochalimaea quintana)).